The sequence spans 927 residues: Tubulin monoglycylase TTLL3 (927 aa).

A compositionally biased stretch (polar residues) spans 35-47 (RSQPSELRTNFSS). Disordered stretches follow at residues 35 to 113 (RSQP…PQPV) and 194 to 227 (HPPG…EENE). Acidic residues predominate over residues 216 to 226 (DATEDEDEEEN). The TTL domain maps to 345–702 (VLKLVVKLEE…DRRLDRSCDT (358 aa)). ATP contacts are provided by residues Lys-476, 482–483 (RG), 514–517 (QKYI), 527–529 (KFD), and 571–572 (CN). Arg-482 is an a protein binding site. The Mg(2+) site is built by Asp-649, Glu-662, and Asn-664. Glu-662 contributes to the ATP binding site. Disordered stretches follow at residues 735-799 (VPVG…SGKG) and 897-927 (EEGH…KTET). Over residues 752–769 (LTQQGSGESKDSGSPTHR) the composition is skewed to polar residues. Residues 776–788 (ARAESLEHTEKPE) are compositionally biased toward basic and acidic residues. The segment covering 916–927 (LSSTEPCSKTET) has biased composition (polar residues).

Requires Mg(2+) as cofactor. As to expression, highly expressed in brain and testis. Expressed in heart, kidney, liver, lung, muscle, spleen, trachea and colon. Expressed in sperm flagellum. In the brain, specifically expressed in ependymal cilia.

The protein localises to the cytoplasm. It localises to the cytoskeleton. The protein resides in the cell projection. It is found in the cilium. Its subcellular location is the cilium axoneme. The protein localises to the flagellum axoneme. It carries out the reaction L-glutamyl-[protein] + glycine + ATP = glycyl-L-glutamyl-[protein] + ADP + phosphate + H(+). Functionally, monoglycylase which modifies alpha- and beta-tubulin, adding a single glycine on the gamma-carboxyl groups of specific glutamate residues to generate monoglycine side chains within the C-terminal tail of tubulin. Not involved in elongation step of the polyglycylation reaction. Preferentially glycylates a beta-tail peptide over the alpha-tail, although shifts its preference toward alpha-tail as beta-tail glutamylation increases. Competes with polyglutamylases for modification site on beta-tubulin substrate, thereby creating an anticorrelation between glycylation and glutamylation reactions. Together with TTLL8, mediates microtubule glycylation of primary and motile cilia, which is essential for their stability and maintenance. Involved in microtubule glycylation of primary cilia in colon which controls cell proliferation of epithelial cells and plays an essential role in colon cancer development. Together with TTLL8, glycylates sperm flagella which regulates axonemal dynein motor activity, thereby controlling flagellar beat, directional sperm swimming and male fertility. The polypeptide is Tubulin monoglycylase TTLL3 (Mus musculus (Mouse)).